We begin with the raw amino-acid sequence, 93 residues long: Small ribosomal subunit protein bS16 (93 aa).

Belongs to the bacterial ribosomal protein bS16 family.

This is Small ribosomal subunit protein bS16 from Opitutus terrae (strain DSM 11246 / JCM 15787 / PB90-1).